Here is a 454-residue protein sequence, read N- to C-terminus: UDP-N-acetylmuramate--L-alanine ligase (454 aa).

Residue 113–119 (GSHGKTT) coordinates ATP.

This sequence belongs to the MurCDEF family.

Its subcellular location is the cytoplasm. It catalyses the reaction UDP-N-acetyl-alpha-D-muramate + L-alanine + ATP = UDP-N-acetyl-alpha-D-muramoyl-L-alanine + ADP + phosphate + H(+). The protein operates within cell wall biogenesis; peptidoglycan biosynthesis. In terms of biological role, cell wall formation. The sequence is that of UDP-N-acetylmuramate--L-alanine ligase from Sulfurihydrogenibium sp. (strain YO3AOP1).